The primary structure comprises 312 residues: Ribonuclease Z (312 aa).

Residues His-62, His-64, Asp-66, His-67, His-144, Asp-215, and His-273 each contribute to the Zn(2+) site. The active-site Proton acceptor is Asp-66.

It belongs to the RNase Z family. In terms of assembly, homodimer. The cofactor is Zn(2+).

The enzyme catalyses Endonucleolytic cleavage of RNA, removing extra 3' nucleotides from tRNA precursor, generating 3' termini of tRNAs. A 3'-hydroxy group is left at the tRNA terminus and a 5'-phosphoryl group is left at the trailer molecule.. In terms of biological role, zinc phosphodiesterase, which displays some tRNA 3'-processing endonuclease activity. Probably involved in tRNA maturation, by removing a 3'-trailer from precursor tRNA. The polypeptide is Ribonuclease Z (Prochlorococcus marinus (strain MIT 9312)).